We begin with the raw amino-acid sequence, 551 residues long: High-affinity glucose transporter (551 aa).

The Cytoplasmic portion of the chain corresponds to Met1–Asn27. Residues Ile28–Ser48 traverse the membrane as a helical segment. Residues Met49 to Tyr70 lie on the Extracellular side of the membrane. The helical transmembrane segment at Gly71 to Phe91 threads the bilayer. Topologically, residues Ser92–Lys98 are cytoplasmic. The chain crosses the membrane as a helical span at residues Val99–Gln119. At Asp120 to Met123 the chain is on the extracellular side. The helical transmembrane segment at Leu124–Val144 threads the bilayer. Over Tyr145–Arg155 the chain is Cytoplasmic. A helical membrane pass occupies residues Gly156–Ile176. The Extracellular portion of the chain corresponds to Gly177–Arg190. Residues Ile191–Pro211 form a helical membrane-spanning segment. The Cytoplasmic portion of the chain corresponds to Glu212–Gln289. Residues Leu290 to Thr310 form a helical membrane-spanning segment. Residues Gly311 to Leu315 are Extracellular-facing. The chain crosses the membrane as a helical span at residues Val316–Ile336. Over Asp337–Pro343 the chain is Cytoplasmic. A helical transmembrane segment spans residues Val344–Ala364. At Thr365–Val395 the chain is on the extracellular side. Asn388 carries N-linked (GlcNAc...) asparagine glycosylation. A helical transmembrane segment spans residues Ile396 to Ile416. Residues Tyr417–Ala432 lie on the Cytoplasmic side of the membrane. A helical membrane pass occupies residues Leu433–Phe453. Residues Lys454–Lys459 are Extracellular-facing. The helical transmembrane segment at Thr460 to Pro480 threads the bilayer. Over Glu481 to Asn551 the chain is Cytoplasmic.

It belongs to the major facilitator superfamily. Sugar transporter (TC 2.A.1.1) family.

It is found in the membrane. High-affinity glucose transporter. This Kluyveromyces lactis (strain ATCC 8585 / CBS 2359 / DSM 70799 / NBRC 1267 / NRRL Y-1140 / WM37) (Yeast) protein is High-affinity glucose transporter (HGT1).